A 265-amino-acid chain; its full sequence is Bradykinin-potentiating and C-type natriuretic peptides (265 aa).

An N-terminal signal peptide occupies residues Met-1–Gly-23. The propeptide occupies Lys-24–Ala-30. Residue Gln-31 is modified to Pyrrolidone carboxylic acid. A propeptide spanning residues Leu-44–Ala-50 is cleaved from the precursor. Pyrrolidone carboxylic acid is present on Gln-51. Residues Leu-64–Ala-70 constitute a propeptide that is removed on maturation. Gln-71 carries the post-translational modification Pyrrolidone carboxylic acid. A propeptide spanning residues Leu-81–Ala-87 is cleaved from the precursor. Gln-88 is modified (pyrrolidone carboxylic acid). Positions Leu-100 to Ala-106 are excised as a propeptide. Gln-107 bears the Pyrrolidone carboxylic acid mark. A propeptide spanning residues Ala-118 to Leu-120 is cleaved from the precursor. Gln-121 carries the post-translational modification Pyrrolidone carboxylic acid. Val-126 is a propeptide. Gln-127 carries the post-translational modification Pyrrolidone carboxylic acid. Positions Leu-132 to Ala-241 are excised as a propeptide. Residues Gly-153–Trp-211 are disordered. Residues Ser-184–Ser-194 are compositionally biased toward low complexity. Residues Pro-196–Gln-206 are compositionally biased toward basic and acidic residues. Cys-249 and Cys-265 are disulfide-bonded.

The protein in the N-terminal section; belongs to the bradykinin-potentiating peptide family. In the C-terminal section; belongs to the natriuretic peptide family. In terms of tissue distribution, expressed by the venom gland.

The protein localises to the secreted. It localises to the cytoplasm. Its subcellular location is the cytosol. In terms of biological role, modestly inhibits ACE (with highest affinity for the N-site) and reveals strong bradykinin-potentiating activity. Induces nitric oxide (NO) production depended on muscarinic acetylcholine receptor M1 subtype (CHRM1) and bradykinin B2 receptor (BDKRB2) activation. Both these receptors contribute to the vasodilation induced by this peptide that may have an indirect action on BDKRB2 and a direct agonistic action on CHRM1. Its function is as follows. Peptide with several activities. It inhibits the activity of the angiotensin-converting enzyme (ACE) by a preferential interaction with its C-domain. It evokes transient hypotension (-14 mmHg) similar to that evoked by 0.5 ug of bradykinin, when injected alone into rats. It has a high bradykinin-potentiating effect (120%), when 60 nmol of BPP-10c are coinjected with 0.5 ug of bradykinin into rats. Does not affect angiotensin-1 pressor effects. Shows potent and long-lasting antihypertensive activity as well as a reduction of the heart rate. It also binds and dose-dependently promotes the activation of cytosolic argininosuccinate synthase (ASS1), an enzyme that catalyzes the conversion of citrulline, L-aspartate and ATP to argininosuccinate, AMP and pyrophosphate. It also enhances ASS1-dependent arginine production in HEK 293 cells, as well as in spontaneous hypertensive rat (SHR) and Wistar rat plasma. In addition, it induces the production of nitric-oxide (NO) by HUVEC cells via the endothelial nitric-oxide synthase (NOS3), which use arginine as a substrate and produce NO. It has been shown to be internalized by ASS1-expressing endothelial (HUVEC) and kidney (HEK 293) cells, and is detected homogenously distributed within the cell cytoplasm for up to 2 hours. Has a vasorelaxant activity in rat aortic strips and a diuretic potency in anesthetized rats. May act by activating natriuretic receptors (NPR1 and/or NPR2). This chain is Bradykinin-potentiating and C-type natriuretic peptides, found in Bothrops insularis (Golden lancehead).